Consider the following 386-residue polypeptide: Succinate--CoA ligase [ADP-forming] subunit beta (386 aa).

The region spanning Lys9–Glu244 is the ATP-grasp domain. ATP contacts are provided by residues Lys46, Gly53 to Gly55, Glu99, Cys102, and Glu107. The Mg(2+) site is built by Asn199 and Asp213. Substrate contacts are provided by residues Asn264 and Gly321–Met323.

It belongs to the succinate/malate CoA ligase beta subunit family. Heterotetramer of two alpha and two beta subunits. The cofactor is Mg(2+).

It catalyses the reaction succinate + ATP + CoA = succinyl-CoA + ADP + phosphate. It carries out the reaction GTP + succinate + CoA = succinyl-CoA + GDP + phosphate. It participates in carbohydrate metabolism; tricarboxylic acid cycle; succinate from succinyl-CoA (ligase route): step 1/1. Its function is as follows. Succinyl-CoA synthetase functions in the citric acid cycle (TCA), coupling the hydrolysis of succinyl-CoA to the synthesis of either ATP or GTP and thus represents the only step of substrate-level phosphorylation in the TCA. The beta subunit provides nucleotide specificity of the enzyme and binds the substrate succinate, while the binding sites for coenzyme A and phosphate are found in the alpha subunit. The sequence is that of Succinate--CoA ligase [ADP-forming] subunit beta from Bacillus thuringiensis (strain Al Hakam).